The following is a 554-amino-acid chain: Dihydroxy-acid dehydratase (554 aa).

D78 contacts Mg(2+). C119 contributes to the [2Fe-2S] cluster binding site. Mg(2+) contacts are provided by D120 and K121. K121 carries the N6-carboxylysine modification. C191 contacts [2Fe-2S] cluster. E442 provides a ligand contact to Mg(2+). S468 acts as the Proton acceptor in catalysis.

It belongs to the IlvD/Edd family. In terms of assembly, homodimer. The cofactor is [2Fe-2S] cluster. Requires Mg(2+) as cofactor.

The catalysed reaction is (2R)-2,3-dihydroxy-3-methylbutanoate = 3-methyl-2-oxobutanoate + H2O. The enzyme catalyses (2R,3R)-2,3-dihydroxy-3-methylpentanoate = (S)-3-methyl-2-oxopentanoate + H2O. It functions in the pathway amino-acid biosynthesis; L-isoleucine biosynthesis; L-isoleucine from 2-oxobutanoate: step 3/4. Its pathway is amino-acid biosynthesis; L-valine biosynthesis; L-valine from pyruvate: step 3/4. In terms of biological role, functions in the biosynthesis of branched-chain amino acids. Catalyzes the dehydration of (2R,3R)-2,3-dihydroxy-3-methylpentanoate (2,3-dihydroxy-3-methylvalerate) into 2-oxo-3-methylpentanoate (2-oxo-3-methylvalerate) and of (2R)-2,3-dihydroxy-3-methylbutanoate (2,3-dihydroxyisovalerate) into 2-oxo-3-methylbutanoate (2-oxoisovalerate), the penultimate precursor to L-isoleucine and L-valine, respectively. The polypeptide is Dihydroxy-acid dehydratase (Acetivibrio thermocellus (strain ATCC 27405 / DSM 1237 / JCM 9322 / NBRC 103400 / NCIMB 10682 / NRRL B-4536 / VPI 7372) (Clostridium thermocellum)).